A 143-amino-acid polypeptide reads, in one-letter code: uncharacterized protein (143 aa).

The chain crosses the membrane as a helical span at residues 65-85 (LVWMLVGTIVLSLDIIFPALV).

It is found in the membrane. This is an uncharacterized protein from Saccharomyces cerevisiae (strain ATCC 204508 / S288c) (Baker's yeast).